A 121-amino-acid chain; its full sequence is Insertion element IS406 uncharacterized 13.3 kDa protein (121 aa).

In Burkholderia multivorans (strain ATCC 17616 / 249), this protein is Insertion element IS406 uncharacterized 13.3 kDa protein.